The primary structure comprises 161 residues: MSSKNGVVRSCLGSMDDIKKVFQRFDKNGDGKISVDELKEVIRALSPTASPEETVTMMKQFDLDGNGFIDLDEFVALFQIGIGGGGNNRNDVSDLKEAFELYDLDGNGRISAKELHSVMKNLGEKCSVQDCKKMISKVDIDGDGCVNFDEFKKMMSNGGGA.

4 EF-hand domains span residues 13–48, 49–84, 90–125, and 126–161; these read GSMDDIKKVFQRFDKNGDGKISVDELKEVIRALSPT, ASPEETVTMMKQFDLDGNGFIDLDEFVALFQIGIGG, NDVSDLKEAFELYDLDGNGRISAKELHSVMKNLGEK, and CSVQDCKKMISKVDIDGDGCVNFDEFKKMMSNGGGA. Ca(2+) contacts are provided by Asp-26, Asn-28, Asp-30, Lys-32, Glu-37, Asp-62, Asp-64, Asn-66, Glu-73, Asp-103, Asp-105, Asn-107, Arg-109, Glu-114, Asp-139, Asp-141, Asp-143, Cys-145, and Glu-150.

Expressed in seed coat, seedling radical, cotyledons, hypocotyl, shoot apex and elongating root. Expressed in the vasculature of cotyledons, leaves and roots. Highly expressed in guard cells, trichomes and hydathodes. Expressed in inflorescence stem branch points, silique abscission zone, young and mature styles and stigmatic papillae, mature anthers and developing seed.

Its function is as follows. Calcium-binding protein that may positively regulate abscisic acid (ABA) inhibition of germination and seedling development. May be required for photoperiod-induced flowering and function in ion homeostasis. The polypeptide is Calcium-binding protein CML24 (CML24) (Arabidopsis thaliana (Mouse-ear cress)).